Here is a 397-residue protein sequence, read N- to C-terminus: Phosphoglycerate kinase (397 aa).

Residues 21-23 (DFN), R37, 60-63 (HLGR), R119, and R152 each bind substrate. ATP-binding positions include K203, G294, E325, and 354–357 (GGDS).

The protein belongs to the phosphoglycerate kinase family. Monomer.

It localises to the cytoplasm. The enzyme catalyses (2R)-3-phosphoglycerate + ATP = (2R)-3-phospho-glyceroyl phosphate + ADP. Its pathway is carbohydrate degradation; glycolysis; pyruvate from D-glyceraldehyde 3-phosphate: step 2/5. The sequence is that of Phosphoglycerate kinase from Chlorobium luteolum (strain DSM 273 / BCRC 81028 / 2530) (Pelodictyon luteolum).